The sequence spans 269 residues: Formamidopyrimidine-DNA glycosylase (269 aa).

The Schiff-base intermediate with DNA role is filled by Pro2. Glu3 serves as the catalytic Proton donor. Lys57 functions as the Proton donor; for beta-elimination activity in the catalytic mechanism. His90, Arg109, and Lys150 together coordinate DNA. The segment at 235–269 (QVYGKAGEPCPECGEAIQEQKIGQRNTFYCSYCQC) adopts an FPG-type zinc-finger fold. Arg259 acts as the Proton donor; for delta-elimination activity in catalysis.

Belongs to the FPG family. As to quaternary structure, monomer. It depends on Zn(2+) as a cofactor.

The enzyme catalyses Hydrolysis of DNA containing ring-opened 7-methylguanine residues, releasing 2,6-diamino-4-hydroxy-5-(N-methyl)formamidopyrimidine.. It catalyses the reaction 2'-deoxyribonucleotide-(2'-deoxyribose 5'-phosphate)-2'-deoxyribonucleotide-DNA = a 3'-end 2'-deoxyribonucleotide-(2,3-dehydro-2,3-deoxyribose 5'-phosphate)-DNA + a 5'-end 5'-phospho-2'-deoxyribonucleoside-DNA + H(+). In terms of biological role, involved in base excision repair of DNA damaged by oxidation or by mutagenic agents. Acts as a DNA glycosylase that recognizes and removes damaged bases. Has a preference for oxidized purines, such as 7,8-dihydro-8-oxoguanine (8-oxoG). Has AP (apurinic/apyrimidinic) lyase activity and introduces nicks in the DNA strand. Cleaves the DNA backbone by beta-delta elimination to generate a single-strand break at the site of the removed base with both 3'- and 5'-phosphates. In Vibrio vulnificus (strain CMCP6), this protein is Formamidopyrimidine-DNA glycosylase.